Here is a 190-residue protein sequence, read N- to C-terminus: Large ribosomal subunit protein bL9 (190 aa).

It belongs to the bacterial ribosomal protein bL9 family.

In terms of biological role, binds to the 23S rRNA. The chain is Large ribosomal subunit protein bL9 from Methylorubrum populi (strain ATCC BAA-705 / NCIMB 13946 / BJ001) (Methylobacterium populi).